Reading from the N-terminus, the 111-residue chain is MSSSEAVTREYTINLHKRLYGTTFKDRAPKAVKQVKLFAQKIMGTKDVRIDNKLNKFLWSQGIKNVPHRVRVTLSRKRNEDENATEKLYTVASLVIVKSFKGLQTKKVADN.

The protein belongs to the eukaryotic ribosomal protein eL31 family.

This Dictyostelium discoideum (Social amoeba) protein is Large ribosomal subunit protein eL31 (rpl31).